Reading from the N-terminus, the 356-residue chain is Methionine import ATP-binding protein MetN 1 (356 aa).

The ABC transporter domain maps to 15-254 (IQIRALNKTY…PVQPITQELL (240 aa)). Position 51-58 (51-58 (GKSGAGKS)) interacts with ATP.

This sequence belongs to the ABC transporter superfamily. Methionine importer (TC 3.A.1.24) family. As to quaternary structure, the complex is composed of two ATP-binding proteins (MetN), two transmembrane proteins (MetI) and a solute-binding protein (MetQ).

The protein resides in the cell inner membrane. The catalysed reaction is L-methionine(out) + ATP + H2O = L-methionine(in) + ADP + phosphate + H(+). It carries out the reaction D-methionine(out) + ATP + H2O = D-methionine(in) + ADP + phosphate + H(+). Its function is as follows. Part of the ABC transporter complex MetNIQ involved in methionine import. Responsible for energy coupling to the transport system. The chain is Methionine import ATP-binding protein MetN 1 from Acinetobacter baylyi (strain ATCC 33305 / BD413 / ADP1).